A 157-amino-acid chain; its full sequence is Secreted effector protein See1 (157 aa).

Residues 1-21 (MLFTTFVSLLLVILCLVHVSA) form the signal peptide. The segment at 124–157 (SYRYGDSHGNSREAEYSVADHQSASGEYKFGPTT) is disordered. Residues 128–138 (GDSHGNSREAE) show a composition bias toward basic and acidic residues.

As to quaternary structure, interacts with a maize homolog of SGT1, a factor acting in cell cycle progression in yeast Saccharomyces cerevisiae and an important component of plant and human innate immunity.

It localises to the secreted. The protein resides in the host cytoplasm. The protein localises to the host nucleus. Effector protein involved in the induction of tumors in infected plant tissues by the fungus. Required for the reactivation of plant DNA synthesis, which is crucial for tumor progression in leaf cells. Interferes with the MAPK-triggered phosphorylation of maize SGT1 at a monocot-specific phosphorylation site, resulting in both modulation of immune responses and reactivation of DNA synthesis during leaf tumor formation. This chain is Secreted effector protein See1, found in Mycosarcoma maydis (Corn smut fungus).